The chain runs to 641 residues: 1-deoxy-D-xylulose-5-phosphate synthase (641 aa).

Thiamine diphosphate contacts are provided by residues His-78 and 119–121 (AHS). Mg(2+) is bound at residue Asp-150. Residues 151 to 152 (GA), Asn-179, Tyr-288, and Glu-370 contribute to the thiamine diphosphate site. Asn-179 provides a ligand contact to Mg(2+).

The protein belongs to the transketolase family. DXPS subfamily. Homodimer. Mg(2+) serves as cofactor. Requires thiamine diphosphate as cofactor.

The catalysed reaction is D-glyceraldehyde 3-phosphate + pyruvate + H(+) = 1-deoxy-D-xylulose 5-phosphate + CO2. It participates in metabolic intermediate biosynthesis; 1-deoxy-D-xylulose 5-phosphate biosynthesis; 1-deoxy-D-xylulose 5-phosphate from D-glyceraldehyde 3-phosphate and pyruvate: step 1/1. Functionally, catalyzes the acyloin condensation reaction between C atoms 2 and 3 of pyruvate and glyceraldehyde 3-phosphate to yield 1-deoxy-D-xylulose-5-phosphate (DXP). This chain is 1-deoxy-D-xylulose-5-phosphate synthase, found in Azorhizobium caulinodans (strain ATCC 43989 / DSM 5975 / JCM 20966 / LMG 6465 / NBRC 14845 / NCIMB 13405 / ORS 571).